A 555-amino-acid polypeptide reads, in one-letter code: MADGDGLGEAAIAAASPASAPGLSPSLGWRERLRAGLAGTGASLWFVAGLGLLYALRVPLRLCENLAAVTVFLNSLTPKFYVALTGTSSLISGLIFIFEWWYFHKHGTSFIEQVSVSHLRPLMGGTESSISEPGSPSNNRESETSRQNLSECKVWRNPLNLFRGAEYRRYTWVTGKEPLTYYDMNLSAQDHQTFFTCDTDFLRPSDTVMQKAWRERNPPARIKAAYQALELNNDCATAYVLLAEEEATTIVDAERLFKQALKAGETIYRRSQQCQHQSPQHEAQLRRDTNVLVYIKRRLAMCARKLGRIREAVKIMRDLMKEFPPLTMLNIHENLLESLLELQAYADVQAVLAKYDDISLPKSAAICYTAALLKTRTVSDKFSPETASRRGLSTAEINAVEAIHRAVEFNPHVPKYLLEMKSLILPPEHILKRGDSEAIAYAFFHLQHWKRIEGALHLLQCTWEGTFRMIPYPLEKGHLFYPYPSCTETADRELLPSFHHVSVYPKKEIPFFIHFTAGLCSSTAMIAFLTHQFPEIMGVFAKAVSMISRTCIEYL.

2 helical membrane-spanning segments follow: residues 36–56 (GLAG…LYAL) and 80–100 (FYVA…IFEW). Positions 126-148 (TESSISEPGSPSNNRESETSRQN) are disordered.

The protein belongs to the ST7 family.

It is found in the membrane. This Bos taurus (Bovine) protein is Suppressor of tumorigenicity 7 protein-like (ST7L).